The chain runs to 386 residues: Succinate--CoA ligase [ADP-forming] subunit beta (386 aa).

One can recognise an ATP-grasp domain in the interval 9–237 (KEVLRDFGVN…LSAEHPLEVE (229 aa)). ATP contacts are provided by residues Lys45, 52-54 (GRG), Val94, and Glu101. Asn192 and Asp206 together coordinate Mg(2+). Residues Asn258 and 315–317 (GIT) each bind substrate.

The protein belongs to the succinate/malate CoA ligase beta subunit family. Heterotetramer of two alpha and two beta subunits. Mg(2+) is required as a cofactor.

The catalysed reaction is succinate + ATP + CoA = succinyl-CoA + ADP + phosphate. The enzyme catalyses GTP + succinate + CoA = succinyl-CoA + GDP + phosphate. It participates in carbohydrate metabolism; tricarboxylic acid cycle; succinate from succinyl-CoA (ligase route): step 1/1. Functionally, succinyl-CoA synthetase functions in the citric acid cycle (TCA), coupling the hydrolysis of succinyl-CoA to the synthesis of either ATP or GTP and thus represents the only step of substrate-level phosphorylation in the TCA. The beta subunit provides nucleotide specificity of the enzyme and binds the substrate succinate, while the binding sites for coenzyme A and phosphate are found in the alpha subunit. The protein is Succinate--CoA ligase [ADP-forming] subunit beta of Deinococcus radiodurans (strain ATCC 13939 / DSM 20539 / JCM 16871 / CCUG 27074 / LMG 4051 / NBRC 15346 / NCIMB 9279 / VKM B-1422 / R1).